We begin with the raw amino-acid sequence, 76 residues long: Kappa-scoloptoxin(15)-Ssd3a (76 aa).

Residues 1-23 (MEGKIIFICFLVVLLTLPELISS) form the signal peptide.

Post-translationally, contains 2 disulfide bonds. Expressed by the venom gland.

It localises to the secreted. In terms of biological role, acts as a voltage-gated potassium channel inhibitor. In Scolopendra dehaani (Thai centipede), this protein is Kappa-scoloptoxin(15)-Ssd3a.